Consider the following 325-residue polypeptide: Acetyl-coenzyme A carboxylase carboxyl transferase subunit alpha (325 aa).

In terms of domain architecture, CoA carboxyltransferase C-terminal spans 35-292 (EINKLEARLE…DDVLKRSLRE (258 aa)).

It belongs to the AccA family. In terms of assembly, acetyl-CoA carboxylase is a heterohexamer composed of biotin carboxyl carrier protein (AccB), biotin carboxylase (AccC) and two subunits each of ACCase subunit alpha (AccA) and ACCase subunit beta (AccD).

Its subcellular location is the cytoplasm. It catalyses the reaction N(6)-carboxybiotinyl-L-lysyl-[protein] + acetyl-CoA = N(6)-biotinyl-L-lysyl-[protein] + malonyl-CoA. It participates in lipid metabolism; malonyl-CoA biosynthesis; malonyl-CoA from acetyl-CoA: step 1/1. Functionally, component of the acetyl coenzyme A carboxylase (ACC) complex. First, biotin carboxylase catalyzes the carboxylation of biotin on its carrier protein (BCCP) and then the CO(2) group is transferred by the carboxyltransferase to acetyl-CoA to form malonyl-CoA. In Anoxybacillus flavithermus (strain DSM 21510 / WK1), this protein is Acetyl-coenzyme A carboxylase carboxyl transferase subunit alpha.